Consider the following 651-residue polypeptide: MCSSEECLIDKSWTSEEKCEYIKCNQDSCEGGGYLTWSHYVKCQYNIGVRVILIILGILYLIILFVIMSSIADDFFCPAISGIVSHLRMSESIAGVTFLAFGNGAPDVFSSISSVLTTPKPKADLALGDLFGTSIFVTTVVLAIIIFTKSFKVAIIPTLRDLIFYMTTLAFIVFCFLKFDKIEVWMPATFLGIYGVYVVTVIILGIYRTHRKKRNLKKKNKELEDFLSRPSSAASTTPIFGAMKLKEETISVSALFHFMIGYSQFIKNLTRANLKRTTNNNNNDNKNEKRGIVNLGFSEPYSIPSERKISTIFKQNTFETDLESLESLADLDGSDDEGREEKFGYAHHTVFTSHDQISLVASEIEEIEITTWRSWDWVWDLFNHLKSWPSRDEFSEMNIFIKIVTVIKVVPVFFFKLTVPSNEMSWCKPLFILHCFASIQFALFSIQIITLKPFDGSPGLWLYGLGFSAILAMVAMYFLPLSKEQKYYKEIYSYLGFLMSIAWIYATSNEIVSVVTMIGVVTGLSMELLGLTIMAWSNCIGDIVADIAVVKQGYPKMAMAAAIGGPLFNLLIGFGLPFTIAAAQGKEMELLINPVYRLLMLFLGISLVTTFVALFIQRFTVRRPHAVLLIFIFVVFLIFICLAEFHVLEWN.

Residues 51–71 (VILIILGILYLIILFVIMSSI) traverse the membrane as a helical segment. At 72-91 (ADDFFCPAISGIVSHLRMSE) the chain is on the cytoplasmic side. A helical transmembrane segment spans residues 92–112 (SIAGVTFLAFGNGAPDVFSSI). Over 113–126 (SSVLTTPKPKADLA) the chain is Extracellular. Residues 127-147 (LGDLFGTSIFVTTVVLAIIIF) form a helical membrane-spanning segment. Residues 148 to 161 (TKSFKVAIIPTLRD) lie on the Cytoplasmic side of the membrane. Residues 162-182 (LIFYMTTLAFIVFCFLKFDKI) traverse the membrane as a helical segment. Position 183 (glutamate 183) is a topological domain, extracellular. Residues 184–204 (VWMPATFLGIYGVYVVTVIIL) traverse the membrane as a helical segment. At 205–398 (GIYRTHRKKR…PSRDEFSEMN (194 aa)) the chain is on the cytoplasmic side. The chain crosses the membrane as a helical span at residues 399 to 419 (IFIKIVTVIKVVPVFFFKLTV). Residues 420 to 428 (PSNEMSWCK) are Extracellular-facing. The chain crosses the membrane as a helical span at residues 429–449 (PLFILHCFASIQFALFSIQII). Residues 450–458 (TLKPFDGSP) are Cytoplasmic-facing. A helical transmembrane segment spans residues 459 to 479 (GLWLYGLGFSAILAMVAMYFL). Topologically, residues 480 to 486 (PLSKEQK) are extracellular. The helical transmembrane segment at 487–507 (YYKEIYSYLGFLMSIAWIYAT) threads the bilayer. At 508 to 510 (SNE) the chain is on the cytoplasmic side. The helical transmembrane segment at 511 to 531 (IVSVVTMIGVVTGLSMELLGL) threads the bilayer. Residues 532–559 (TIMAWSNCIGDIVADIAVVKQGYPKMAM) lie on the Extracellular side of the membrane. Residues 560-580 (AAAIGGPLFNLLIGFGLPFTI) form a helical membrane-spanning segment. The Cytoplasmic segment spans residues 581-595 (AAAQGKEMELLINPV). The helical transmembrane segment at 596–616 (YRLLMLFLGISLVTTFVALFI) threads the bilayer. Over 617–626 (QRFTVRRPHA) the chain is Extracellular. Residues 627 to 647 (VLLIFIFVVFLIFICLAEFHV) form a helical membrane-spanning segment. Residues 648 to 651 (LEWN) are Cytoplasmic-facing.

This sequence belongs to the Ca(2+):cation antiporter (CaCA) (TC 2.A.19) family. SLC24A subfamily. As to expression, expressed in the seam cells of the organism. Expression is visible in the seam cells across all larval stages, and expression persists into the adult stage of the organism.

It is found in the mitochondrion inner membrane. Its activity is regulated as follows. Inhibited by the sodium/calcium exchanger inhibitor CGP-37157. Functionally, mitochondrial sodium/calcium antiporter that mediates sodium-dependent calcium efflux from mitochondrion, thereby acting as a key regulator of mitochondrion calcium homeostasis. Required for patterning of neural circuits: functions in the same pathway as RAC-dependent effectors of the unc-6/netrin signaling pathway to set left/ right patterning of the VD/DD GABAergic circuit. In Caenorhabditis elegans, this protein is Mitochondrial sodium/calcium exchanger protein.